Consider the following 108-residue polypeptide: uncharacterized protein (108 aa).

2 helical membrane-spanning segments follow: residues 5 to 27 (TVYG…QLEI) and 83 to 105 (IFLM…LNIF).

The protein localises to the membrane. This is an uncharacterized protein from Schizosaccharomyces pombe (strain 972 / ATCC 24843) (Fission yeast).